A 282-amino-acid chain; its full sequence is MPKKTATKANPKEVSDSENDSVVSEEEDNVPVTKGGKNAKASKAKPKEVSESDNSGSEQSEESEDEAPKKGKVNAKKAPAKKAPVKKGKQDSDSDNEEDEASEDGSDDEEDVVSADDSDSDEAPKGKAAKKAPAKKAPAKKAPAKKAPAKKGKAKDEDDESEDEAPKKGKGKGKATKKDGDKPKKPLSDYQKFLSKRMPELREEEPGKPYKEYMKMAGAEWTEQNGGTKKKPAAKSGSKTAKKAPAKGGSKSTAKKAPAKKAPAKKAPAKKSKKEASDEESD.

Residues 1–282 are disordered; that stretch reads MPKKTATKAN…KKEASDEESD (282 aa). The segment covering 16–29 has biased composition (acidic residues); that stretch reads DSENDSVVSEEEDN. A compositionally biased stretch (basic residues) spans 70–87; sequence KGKVNAKKAPAKKAPVKK. Residues 93-121 are compositionally biased toward acidic residues; that stretch reads DSDNEEDEASEDGSDDEEDVVSADDSDSD. The segment covering 127–153 has biased composition (basic residues); sequence KAAKKAPAKKAPAKKAPAKKAPAKKGK. Composition is skewed to basic and acidic residues over residues 176–187 and 197–214; these read TKKDGDKPKKPL and RMPE…KEYM. A DNA-binding region (HMG box) is located at residues 183–252; it reads PKKPLSDYQK…KAPAKGGSKS (70 aa). The segment covering 253–273 has biased composition (basic residues); that stretch reads TAKKAPAKKAPAKKAPAKKSK.

This chain is HMG box-containing protein R545, found in Acanthamoeba polyphaga mimivirus (APMV).